The sequence spans 370 residues: Anthranilate phosphoribosyltransferase (370 aa).

5-phospho-alpha-D-ribose 1-diphosphate contacts are provided by residues Gly82, 85–86, Thr90, 92–95, 110–118, and Ser122; these read GD, NVST, and KHGNRAATS. Gly82 is an anthranilate binding site. A Mg(2+)-binding site is contributed by Ser94. Asn113 serves as a coordination point for anthranilate. Arg168 provides a ligand contact to anthranilate. Asp226 and Glu227 together coordinate Mg(2+).

Belongs to the anthranilate phosphoribosyltransferase family. As to quaternary structure, homodimer. Mg(2+) is required as a cofactor.

The catalysed reaction is N-(5-phospho-beta-D-ribosyl)anthranilate + diphosphate = 5-phospho-alpha-D-ribose 1-diphosphate + anthranilate. Its pathway is amino-acid biosynthesis; L-tryptophan biosynthesis; L-tryptophan from chorismate: step 2/5. In terms of biological role, catalyzes the transfer of the phosphoribosyl group of 5-phosphorylribose-1-pyrophosphate (PRPP) to anthranilate to yield N-(5'-phosphoribosyl)-anthranilate (PRA). The polypeptide is Anthranilate phosphoribosyltransferase (Methanosarcina mazei (strain ATCC BAA-159 / DSM 3647 / Goe1 / Go1 / JCM 11833 / OCM 88) (Methanosarcina frisia)).